The chain runs to 200 residues: MKTLVLGSTSPFRKTILEKLQLPFHCAKPNVDETEQKNESPQALVERLAIEKAKAVSSEYPNALIIGSDQVAVCEEEILGKPHNFDNAVVQLNKFSGKSITFYTGLCVYDSEKDKTIALVEPFIVHFNQLSQKDIANYLNAEQPYNCAGSFKSEGLGICLFSKLEGDDPNTLIGLPLIKLVGLLKQHGIDVLAEQSKLTV.

Residue Asp69 is the Proton acceptor of the active site.

This sequence belongs to the Maf family. YceF subfamily. A divalent metal cation is required as a cofactor.

Its subcellular location is the cytoplasm. The enzyme catalyses N(7)-methyl-GTP + H2O = N(7)-methyl-GMP + diphosphate + H(+). Functionally, nucleoside triphosphate pyrophosphatase that hydrolyzes 7-methyl-GTP (m(7)GTP). May have a dual role in cell division arrest and in preventing the incorporation of modified nucleotides into cellular nucleic acids. The chain is 7-methyl-GTP pyrophosphatase from Colwellia psychrerythraea (strain 34H / ATCC BAA-681) (Vibrio psychroerythus).